Reading from the N-terminus, the 771-residue chain is MMQTQVASRAGYSNLPQFGAGIAQDIKTQAINNLKECLKLTTINRFLTSSYEEDAKSVERKIFSAVYQMTKIGLIDREKREINAIWFTFVGLSAQNIRHLEICSITDFNALFSITNQELRSLADRGRLDVETKRKLLQSTVILQNHWNAYHSRTSSGSTDEPSGQSTPAIVTPSPKFNVPSLSVTSAKMIQSSSMGFATTPKSPKTSSRLVHAIPHKWHRSTKFRFSGDAVCHFCQRPLGFGFLNAWEKCRSCKWKVHTQCKGRVGDSCGLTPDHLRFLFDKLIQENNGGMWKDPQSVPGSRSMNEPAFQFPDTAIDSSSSTNSSAPSTPALPAGISGNVSSLTAPYRSERKFLFPDTENYSVHNRLPILVISEGDHPTTTEIQQETENHNKSAAASMSGNIESEGTIVANHEDSTGSQEVDSEAAPSQEAVDKFNKRADGGFTWERHAWNMSTIRGPNAQASWNEVTIQFETIEFDKQAPIIGRGRFGKVLRGFHYGDVAVKVYTMEHISDASKKAEEFKLEVSAYKNTRHDNIALFLGYFMSDGQYGMVMSLSKGSQSLYTLLHVVREKLDLATTRKIAQQICQAVSYLHTKKILHKDLRSKNILLESKNKVVITDFGILSMKRLAHPKQKSGYLTSKFWTNYIAPELAMAMRTEYDEYECDDFPFSENSDVYAFGCVWFEMLTGALPYAGELPHQILFAKTQGIRPVLPNVKCTQELKELLVSCWNTAPQDRPTLTDINLKLTALPKKPRVNRSPSFPVMMKSYESTF.

A compositionally biased stretch (polar residues) spans 152 to 169 (SRTSSGSTDEPSGQSTPA). The segment at 152–172 (SRTSSGSTDEPSGQSTPAIVT) is disordered. The Phorbol-ester/DAG-type zinc finger occupies 215-269 (PHKWHRSTKFRFSGDAVCHFCQRPLGFGFLNAWEKCRSCKWKVHTQCKGRVGDSC). Disordered regions lie at residues 290-339 (GMWK…ISGN) and 414-433 (DSTG…EAVD). Residues 318–331 (SSSSTNSSAPSTPA) show a composition bias toward low complexity. The region spanning 477 to 748 (DKQAPIIGRG…TDINLKLTAL (272 aa)) is the Protein kinase domain. Residues 483–491 (IGRGRFGKV) and Lys503 each bind ATP. Residue Asp600 is the Proton acceptor of the active site.

It belongs to the protein kinase superfamily. TKL Ser/Thr protein kinase family. Interacts with mek-2. Mg(2+) is required as a cofactor.

It catalyses the reaction L-seryl-[protein] + ATP = O-phospho-L-seryl-[protein] + ADP + H(+). It carries out the reaction L-threonyl-[protein] + ATP = O-phospho-L-threonyl-[protein] + ADP + H(+). Serine/threonine-protein kinase which positively regulates Ras-mediated signaling probably acting at the level of let-60/ras or/and lin-45/raf. Involved in sex myoblast migration. Plays a role in responses to M.nematophilum-mediated bacterial infection by promoting tail swelling and preventing constipation. Functions redundantly with ksr-2 in the Ras-mediated regulation of larval survival, the development of excretory canal and in mpk-1 phosphorylation in somatic cells. In addition, involved in determining vulval precursor cell fate during vulval induction independently of its kinase activity. Plays a role in egg-laying. In Caenorhabditis elegans, this protein is Kinase suppressor of Ras A.